We begin with the raw amino-acid sequence, 112 residues long: Protein ECM19 (112 aa).

A helical membrane pass occupies residues 35–57; sequence NTLDMVTIGIACLVGVYTGTRFF. Residues 82–112 form a disordered region; the sequence is EDGNLLKVTPSLSSTPAAPPTPPTPPTPPQQ. Residues 98-112 are compositionally biased toward pro residues; it reads AAPPTPPTPPTPPQQ.

The protein resides in the mitochondrion membrane. Functionally, may be involved in cell wall organization and biogenesis. The chain is Protein ECM19 (ECM19) from Saccharomyces cerevisiae (strain ATCC 204508 / S288c) (Baker's yeast).